A 98-amino-acid polypeptide reads, in one-letter code: NADH-ubiquinone oxidoreductase chain 4L (98 aa).

3 helical membrane-spanning segments follow: residues methionine 1–methionine 21, serine 29–leucine 49, and isoleucine 61–valine 81.

It belongs to the complex I subunit 4L family. Core subunit of respiratory chain NADH dehydrogenase (Complex I) which is composed of 45 different subunits.

It is found in the mitochondrion inner membrane. It catalyses the reaction a ubiquinone + NADH + 5 H(+)(in) = a ubiquinol + NAD(+) + 4 H(+)(out). Core subunit of the mitochondrial membrane respiratory chain NADH dehydrogenase (Complex I) which catalyzes electron transfer from NADH through the respiratory chain, using ubiquinone as an electron acceptor. Part of the enzyme membrane arm which is embedded in the lipid bilayer and involved in proton translocation. The protein is NADH-ubiquinone oxidoreductase chain 4L (MT-ND4L) of Halichoerus grypus (Gray seal).